A 224-amino-acid polypeptide reads, in one-letter code: Phosphoribosyltransferase domain-containing protein 1 (224 aa).

Mg(2+)-binding residues include E140 and D141. Residues 140–148 (EDIINTGRT), K172, 193–194 (FV), and D200 each bind GMP. D200 is a Mg(2+) binding site.

It belongs to the purine/pyrimidine phosphoribosyltransferase family.

This chain is Phosphoribosyltransferase domain-containing protein 1 (prtfdc1), found in Xenopus tropicalis (Western clawed frog).